The sequence spans 168 residues: Photosystem I assembly protein Ycf3 (168 aa).

3 TPR repeats span residues 35 to 68 (AFAY…EMDP), 72 to 105 (SYIL…NPFL), and 120 to 153 (GEQA…TPGN).

This sequence belongs to the Ycf3 family.

The protein localises to the plastid membrane. Its function is as follows. Essential for the assembly of the photosystem I (PSI) complex. May act as a chaperone-like factor to guide the assembly of the PSI subunits. This Cuscuta gronovii (Common dodder) protein is Photosystem I assembly protein Ycf3.